We begin with the raw amino-acid sequence, 230 residues long: Orotidine 5'-phosphate decarboxylase (230 aa).

Residues aspartate 10, lysine 31, 58 to 67 (DLKLHDIPNT), threonine 117, arginine 179, glutamine 188, glycine 208, and arginine 209 each bind substrate. The active-site Proton donor is the lysine 60.

The protein belongs to the OMP decarboxylase family. Type 1 subfamily. As to quaternary structure, homodimer.

It carries out the reaction orotidine 5'-phosphate + H(+) = UMP + CO2. Its pathway is pyrimidine metabolism; UMP biosynthesis via de novo pathway; UMP from orotate: step 2/2. In terms of biological role, catalyzes the decarboxylation of orotidine 5'-monophosphate (OMP) to uridine 5'-monophosphate (UMP). The polypeptide is Orotidine 5'-phosphate decarboxylase (Staphylococcus aureus (strain USA300)).